The primary structure comprises 146 residues: Bacterial hemoglobin (146 aa).

The region spanning 1-138 (MLDQQTINII…IADVFIQVEA (138 aa)) is the Globin domain. Gln53 and His85 together coordinate heme b.

Belongs to the globin family. As to quaternary structure, homodimer.

Its function is as follows. This protein functions as a terminal oxidase. This Vitreoscilla stercoraria protein is Bacterial hemoglobin (vhb).